Reading from the N-terminus, the 175-residue chain is Phosphatidylglycerol/phosphatidylinositol transfer protein (175 aa).

A signal peptide spans 1 to 21 (MKFLSTAAALLVCLAPVSTTA). Residues 22 to 37 (RSLDFFKSSQSPIQAQ) constitute a propeptide that is removed on maturation.

This sequence belongs to the NPC2 family. Monomer.

The protein resides in the cytoplasm. The protein localises to the cytoplasmic vesicle. Its subcellular location is the golgi apparatus. In terms of biological role, catalyzes the intermembrane transfer of phosphatidylglycerol and phosphatidylinositol. In Aspergillus oryzae (strain ATCC 42149 / RIB 40) (Yellow koji mold), this protein is Phosphatidylglycerol/phosphatidylinositol transfer protein (pltp).